Here is a 642-residue protein sequence, read N- to C-terminus: Threonine--tRNA ligase (642 aa).

A catalytic region spans residues 239 to 530 (DHRKLGKELN…LTEHYAGAFP (292 aa)). Zn(2+) is bound by residues Cys331, His382, and His507.

Belongs to the class-II aminoacyl-tRNA synthetase family. In terms of assembly, homodimer. Requires Zn(2+) as cofactor.

It is found in the cytoplasm. It carries out the reaction tRNA(Thr) + L-threonine + ATP = L-threonyl-tRNA(Thr) + AMP + diphosphate + H(+). Catalyzes the attachment of threonine to tRNA(Thr) in a two-step reaction: L-threonine is first activated by ATP to form Thr-AMP and then transferred to the acceptor end of tRNA(Thr). Also edits incorrectly charged L-seryl-tRNA(Thr). This Lawsonia intracellularis (strain PHE/MN1-00) protein is Threonine--tRNA ligase.